The following is a 325-amino-acid chain: Phenylalanine--tRNA ligase alpha subunit (325 aa).

Glu251 is a Mg(2+) binding site.

The protein belongs to the class-II aminoacyl-tRNA synthetase family. Phe-tRNA synthetase alpha subunit type 1 subfamily. In terms of assembly, tetramer of two alpha and two beta subunits. It depends on Mg(2+) as a cofactor.

Its subcellular location is the cytoplasm. The enzyme catalyses tRNA(Phe) + L-phenylalanine + ATP = L-phenylalanyl-tRNA(Phe) + AMP + diphosphate + H(+). In Thermotoga petrophila (strain ATCC BAA-488 / DSM 13995 / JCM 10881 / RKU-1), this protein is Phenylalanine--tRNA ligase alpha subunit.